Reading from the N-terminus, the 345-residue chain is Dihydroorotate dehydrogenase (quinone) (345 aa).

FMN-binding positions include 65–69 (AGLDK) and T89. K69 serves as a coordination point for substrate. Substrate is bound at residue 114 to 118 (NRMGF). Residues N142 and N175 each contribute to the FMN site. N175 provides a ligand contact to substrate. The Nucleophile role is filled by S178. N180 provides a ligand contact to substrate. FMN is bound by residues K220 and T248. Substrate is bound at residue 249 to 250 (NT). FMN is bound by residues G271, G300, and 321 to 322 (YT).

The protein belongs to the dihydroorotate dehydrogenase family. Type 2 subfamily. As to quaternary structure, monomer. The cofactor is FMN.

The protein resides in the cell membrane. The enzyme catalyses (S)-dihydroorotate + a quinone = orotate + a quinol. It functions in the pathway pyrimidine metabolism; UMP biosynthesis via de novo pathway; orotate from (S)-dihydroorotate (quinone route): step 1/1. Its function is as follows. Catalyzes the conversion of dihydroorotate to orotate with quinone as electron acceptor. The sequence is that of Dihydroorotate dehydrogenase (quinone) from Burkholderia ambifaria (strain ATCC BAA-244 / DSM 16087 / CCUG 44356 / LMG 19182 / AMMD) (Burkholderia cepacia (strain AMMD)).